A 228-amino-acid polypeptide reads, in one-letter code: Cytidylate kinase (228 aa).

Position 17–25 (17–25 (GPTASGKGT)) interacts with ATP.

This sequence belongs to the cytidylate kinase family. Type 1 subfamily.

It localises to the cytoplasm. It carries out the reaction CMP + ATP = CDP + ADP. The enzyme catalyses dCMP + ATP = dCDP + ADP. The chain is Cytidylate kinase from Paraburkholderia phymatum (strain DSM 17167 / CIP 108236 / LMG 21445 / STM815) (Burkholderia phymatum).